The primary structure comprises 364 residues: Histidinol-phosphate aminotransferase (364 aa).

Residue Lys-225 is modified to N6-(pyridoxal phosphate)lysine.

Belongs to the class-II pyridoxal-phosphate-dependent aminotransferase family. Histidinol-phosphate aminotransferase subfamily. As to quaternary structure, homodimer. The cofactor is pyridoxal 5'-phosphate.

The enzyme catalyses L-histidinol phosphate + 2-oxoglutarate = 3-(imidazol-4-yl)-2-oxopropyl phosphate + L-glutamate. It participates in amino-acid biosynthesis; L-histidine biosynthesis; L-histidine from 5-phospho-alpha-D-ribose 1-diphosphate: step 7/9. This chain is Histidinol-phosphate aminotransferase, found in Sulfurovum sp. (strain NBC37-1).